The chain runs to 364 residues: DNA replication and repair protein RecF (364 aa).

30–37 (GNNAQGKT) lines the ATP pocket.

This sequence belongs to the RecF family.

Its subcellular location is the cytoplasm. Functionally, the RecF protein is involved in DNA metabolism; it is required for DNA replication and normal SOS inducibility. RecF binds preferentially to single-stranded, linear DNA. It also seems to bind ATP. This chain is DNA replication and repair protein RecF, found in Clostridium botulinum (strain 657 / Type Ba4).